The sequence spans 634 residues: Kelch-like protein 22 (634 aa).

N-acetylalanine is present on Ala2. The 68-residue stretch at 50–117 (FDVVLVVEGR…IYTSELELSL (68 aa)) folds into the BTB domain. 6 Kelch repeats span residues 299 to 349 (CVVG…VLNN), 350 to 399 (FVYL…VVGK), 400 to 446 (YIYA…TLQG), 448 to 493 (MYIT…ALLD), 494 to 544 (KLFV…VLDN), and 545 to 593 (RIYV…VLTL). Thr463 carries the phosphothreonine modification. Phosphotyrosine is present on Tyr466. Phosphothreonine is present on Thr475. Positions 600 to 634 (EQPRGTPNRSQADADFASEVMSVSDWEEFDNSSED) are disordered. Thr605 carries the phosphothreonine modification. The span at 624–634 (DWEEFDNSSED) shows a compositional bias: acidic residues.

As to quaternary structure, component of the BCR(KLHL22) E3 ubiquitin ligase complex, at least composed of CUL3, KLHL22 and RBX1. Interacts with PLK1. Interacts with DEPDC5 (via DEP domain); the interaction depends on amino acid availability. Interacts with YWHAE; required for the nuclear localization of KLHL22 upon amino acid starvation.

The protein localises to the cytoplasm. Its subcellular location is the cytosol. It localises to the cytoskeleton. It is found in the microtubule organizing center. The protein resides in the centrosome. The protein localises to the spindle. Its subcellular location is the nucleus. It localises to the lysosome. Its pathway is protein modification; protein ubiquitination. Functionally, substrate-specific adapter of a BCR (BTB-CUL3-RBX1) E3 ubiquitin ligase complex required for chromosome alignment and localization of PLK1 at kinetochores. The BCR(KLHL22) ubiquitin ligase complex mediates monoubiquitination of PLK1, leading to PLK1 dissociation from phosphoreceptor proteins and subsequent removal from kinetochores, allowing silencing of the spindle assembly checkpoint (SAC) and chromosome segregation. Monoubiquitination of PLK1 does not lead to PLK1 degradation. The BCR(KLHL22) ubiquitin ligase complex is also responsible for the amino acid-stimulated 'Lys-48' polyubiquitination and proteasomal degradation of DEPDC5. Through the degradation of DEPDC5, releases the GATOR1 complex-mediated inhibition of the TORC1 pathway. It is therefore an amino acid-dependent activator within the amino acid-sensing branch of the TORC1 pathway, indirectly regulating different cellular processes including cell growth and autophagy. The chain is Kelch-like protein 22 from Rattus norvegicus (Rat).